We begin with the raw amino-acid sequence, 81 residues long: Small ribosomal subunit protein bS18 (81 aa).

It belongs to the bacterial ribosomal protein bS18 family. Part of the 30S ribosomal subunit. Forms a tight heterodimer with protein bS6.

In terms of biological role, binds as a heterodimer with protein bS6 to the central domain of the 16S rRNA, where it helps stabilize the platform of the 30S subunit. The polypeptide is Small ribosomal subunit protein bS18 (Rubrobacter xylanophilus (strain DSM 9941 / JCM 11954 / NBRC 16129 / PRD-1)).